Consider the following 380-residue polypeptide: GATOR1 complex protein NPRL2 (380 aa).

An interaction with PDPK1 region spans residues 1-133 (MGSGCRIECI…SKQKLVPIMT (133 aa)). Residue Arg78 coordinates GDP. Arg78 carries the asymmetric dimethylarginine modification. Glycyl lysine isopeptide (Lys-Gly) (interchain with G-Cter in ubiquitin) cross-links involve residues Lys158 and Lys357.

This sequence belongs to the NPR2 family. In terms of assembly, within the GATOR complex, component of the GATOR1 subcomplex, made of DEPDC5, NPRL2 and NPRL3. GATOR1 mediates the strong interaction of the GATOR complex with small GTPases Rag (RagA/RRAGA, RagB/RRAGB, RagC/RRAGC and/or RagD/RRAGD) heterodimers. GATOR1 interacts with GPR155/LYCHOS; interaction takes place in presence of cholesterol and prevents interaction between GATOR1 and KICSTOR. Interacts with PDPK1. In the presence of abundant amino acids, ubiquitinated at Lys-158 and Lys-357 via 'Lys-6'-linked ubiquitination by the WDR24 component of the GATOR2 complex, thereby inhibiting the GATOR1 complex and promoting mTORC1 activation. In terms of processing, asymmetric dimethylation at Arg-78 by PRMT1 inhibits the GTPase activator activity of the GATOR1 complex and consequently inducing timely mTORC1 activation under methionine-sufficient conditions. As to expression, most abundant in skeletal muscle, followed by brain, liver and pancreas, with lower amounts in lung, kidney, placenta and heart. Expressed in the frontal lobe cortex as well as in the temporal, parietal, and occipital lobes. Expressed in most lung cancer cell lines tested.

Its subcellular location is the lysosome membrane. Catalytic component of the GATOR1 complex, a multiprotein complex that functions as an inhibitor of the amino acid-sensing branch of the mTORC1 pathway. In response to amino acid depletion, the GATOR1 complex has GTPase activating protein (GAP) activity and strongly increases GTP hydrolysis by RagA/RRAGA (or RagB/RRAGB) within heterodimeric Rag complexes, thereby turning them into their inactive GDP-bound form, releasing mTORC1 from lysosomal surface and inhibiting mTORC1 signaling. In the presence of abundant amino acids, the GATOR1 complex is ubiquitinated and inhibited by GATOR2. Within the GATOR1 complex, NPRL2 constitutes the catalytic subunit that mediates the GTPase activator activity and under methionine-sufficient conditions, the GTPase activator activity is inhibited by PRMT1 through methylation and consequently inducing timely mTORC1 activation. Its function is as follows. Suppresses Src-dependent tyrosine phosphorylation and activation of PDPK1 and its downstream signaling. Down-regulates PDPK1 kinase activity by interfering with tyrosine phosphorylation at 'Tyr-9', 'Tyr-373' and 'Tyr-376' residues. May act as a tumor suppressor. Suppresses cell growth and enhances sensitivity to various anticancer drugs. This is GATOR1 complex protein NPRL2 from Homo sapiens (Human).